A 354-amino-acid chain; its full sequence is Ferrochelatase (354 aa).

The Fe cation site is built by His204 and Glu306.

The protein belongs to the ferrochelatase family.

It localises to the cytoplasm. The enzyme catalyses heme b + 2 H(+) = protoporphyrin IX + Fe(2+). It participates in porphyrin-containing compound metabolism; protoheme biosynthesis; protoheme from protoporphyrin-IX: step 1/1. Catalyzes the ferrous insertion into protoporphyrin IX. In Coxiella burnetii (strain CbuK_Q154) (Coxiella burnetii (strain Q154)), this protein is Ferrochelatase.